The chain runs to 198 residues: MORN repeat-containing protein 4 homolog (198 aa).

An N-acetylalanine modification is found at Ala2. Low complexity predominate over residues 23–45 (QHQQHPHQQGQHGHHQQGQGQSQ). Positions 23-46 (QHQQHPHQQGQHGHHQQGQGQSQY) are disordered. MORN repeat units follow at residues 64–87 (YIGE…DGTR), 88–109 (YDGQ…ADGA), 111–132 (YEGE…ADGM), and 134–153 (YEGE…TFQD).

Interacts with ninaC. Post-translationally, phosphorylated under dark conditions and is dephosphorylated by light exposure. Retina. Expressed primarily in the phototransducing compartment of photoreceptor cells, the rhabdomeres and its expression is dependent on ninaC protein (at protein level).

Its subcellular location is the membrane. It localises to the cell projection. The protein resides in the rhabdomere membrane. Its function is as follows. Plays a role in promoting axonal degeneration following neuronal injury by toxic insult or trauma. Organizes rhabdomeric components to suppress random activation of the phototransduction cascade and thus increases the signaling fidelity of dark-adapted photoreceptors. The rtp/ninaC complex is required for stability of inad and inac and the normal termination of phototransduction in the retina. The chain is MORN repeat-containing protein 4 homolog from Drosophila melanogaster (Fruit fly).